Reading from the N-terminus, the 419-residue chain is Serine hydroxymethyltransferase (419 aa).

(6S)-5,6,7,8-tetrahydrofolate contacts are provided by residues leucine 121 and 125–127 (GHL). Position 230 is an N6-(pyridoxal phosphate)lysine (lysine 230). 355–357 (SPF) provides a ligand contact to (6S)-5,6,7,8-tetrahydrofolate.

Belongs to the SHMT family. Homodimer. Requires pyridoxal 5'-phosphate as cofactor.

The protein resides in the cytoplasm. It carries out the reaction (6R)-5,10-methylene-5,6,7,8-tetrahydrofolate + glycine + H2O = (6S)-5,6,7,8-tetrahydrofolate + L-serine. It functions in the pathway one-carbon metabolism; tetrahydrofolate interconversion. It participates in amino-acid biosynthesis; glycine biosynthesis; glycine from L-serine: step 1/1. Catalyzes the reversible interconversion of serine and glycine with tetrahydrofolate (THF) serving as the one-carbon carrier. This reaction serves as the major source of one-carbon groups required for the biosynthesis of purines, thymidylate, methionine, and other important biomolecules. Also exhibits THF-independent aldolase activity toward beta-hydroxyamino acids, producing glycine and aldehydes, via a retro-aldol mechanism. The sequence is that of Serine hydroxymethyltransferase from Streptococcus uberis (strain ATCC BAA-854 / 0140J).